The following is a 504-amino-acid chain: MSTVYVLEPPTKGKVIVNTTHGPIDVELWPKEAPKSVRNFVQLCLEGYFDNTIFHRVIPGFLVQGGDPTGSGTGGDSIYGGVFADEFHSRLRFSHRGIVAMANASSPNSNGSQFFFTLDKCDWLDKKHTIFGKVTGDSIYNLLRLGEVDTSKDDRPLDPAPKILSVEVLWNPFEDIVPRVLAKTSEESAAEIKEPPTKPVKKLNLLSFGEEAEEEEKELAVVKQKIKSSHDVLNDPRLLKAEASDKERNASESKEVLSVREALNAKKEAAQKDKSFSVSDTVGNSDDDDDGEDETKFDAKMRNQVLSRRKEIGDTPSKPTQKKKSSSLKGREESTQRSDAVSSEDEKPRMEKLSLKKKGIGSEAKAEHMEKGDTDLQLYNASERARQLHKLKKRRLQGNEDSVLAKLEKFKQSISAKPFTSSNEPVVLTSSSEPVDNKEEDLSDWKNVKLKFAPERGKDKMSRRDDPDAYMVVDPLLEKGKEKFNRMQAKQKRREREWSGKSLA.

Position 2 is an N-acetylserine (Ser-2). Positions 16–167 (IVNTTHGPID…DPAPKILSVE (152 aa)) constitute a PPIase cyclophilin-type domain. Residues 204–274 (NLLSFGEEAE…AKKEAAQKDK (71 aa)) adopt a coiled-coil conformation. Basic and acidic residues-rich tracts occupy residues 237-275 (RLLK…KDKS), 344-354 (EDEKPRMEKLS), and 364-374 (AKAEHMEKGDT). Disordered stretches follow at residues 237 to 374 (RLLK…KGDT), 416 to 441 (AKPF…KEED), and 482 to 504 (EKFN…KSLA). Residues 416–434 (AKPFTSSNEPVVLTSSSEP) are compositionally biased toward polar residues. A compositionally biased stretch (basic and acidic residues) spans 494–504 (REREWSGKSLA).

The protein belongs to the cyclophilin-type PPIase family. In terms of tissue distribution, ubiquitous.

Its subcellular location is the nucleus. It is found in the cytoplasm. The catalysed reaction is [protein]-peptidylproline (omega=180) = [protein]-peptidylproline (omega=0). PPIases accelerate the folding of proteins. It catalyzes the cis-trans isomerization of proline imidic peptide bonds in oligopeptides. Involved in plant response to pathogen infection by increasing PAD4 expression in absence of EDS1 up-regulation. The protein is Peptidyl-prolyl cis-trans isomerase CYP57 (CYP57) of Arabidopsis thaliana (Mouse-ear cress).